The chain runs to 593 residues: Proteasome-associated ATPase (593 aa).

Residues D5–P94 are a coiled coil. G281–L286 is an ATP binding site. The interval G574–L593 is disordered. The span at E584 to L593 shows a compositional bias: polar residues. The segment at Y592–L593 is docks into pockets in the proteasome alpha-ring.

This sequence belongs to the AAA ATPase family. Homohexamer. Assembles into a hexameric ring structure that caps the 20S proteasome core. Strongly interacts with the prokaryotic ubiquitin-like protein Pup through a hydrophobic interface; the interacting region of ARC lies in its N-terminal coiled-coil domain. There is one Pup binding site per ARC hexamer ring. Upon ATP-binding, the C-terminus of ARC interacts with the alpha-rings of the proteasome core, possibly by binding to the intersubunit pockets.

It functions in the pathway protein degradation; proteasomal Pup-dependent pathway. Functionally, ATPase which is responsible for recognizing, binding, unfolding and translocation of pupylated proteins into the bacterial 20S proteasome core particle. May be essential for opening the gate of the 20S proteasome via an interaction with its C-terminus, thereby allowing substrate entry and access to the site of proteolysis. Thus, the C-termini of the proteasomal ATPase may function like a 'key in a lock' to induce gate opening and therefore regulate proteolysis. This is Proteasome-associated ATPase from Salinispora arenicola (strain CNS-205).